A 378-amino-acid chain; its full sequence is SWI/SNF-related matrix-associated actin-dependent regulator of chromatin subfamily B member 1 (378 aa).

The tract at residues M1–S106 is DNA-binding.

Belongs to the SNF5 family. Component of the multiprotein chromatin-remodeling complexes SWI/SNF. Component of neural progenitors-specific chromatin remodeling complex (npBAF complex) and the neuron-specific chromatin remodeling complex (nBAF complex). Component of the BAF (SWI/SNF) chromatin remodeling complex. Component of the SWI/SNF-B (PBAF) chromatin remodeling complex. Binds to double-stranded DNA.

The protein localises to the nucleus. Involved in chromatin-remodeling. Core component of the BAF (SWI/SNF) complex. This ATP-dependent chromatin-remodeling complex plays important roles in cell proliferation and differentiation, in cellular antiviral activities and inhibition of tumor formation. Belongs to the neural progenitors-specific chromatin remodeling complex (npBAF complex) and the neuron-specific chromatin remodeling complex (nBAF complex) and may play a role in neural development. The protein is SWI/SNF-related matrix-associated actin-dependent regulator of chromatin subfamily B member 1 (smarcb1) of Xenopus tropicalis (Western clawed frog).